The sequence spans 565 residues: Periplasmic trehalase (565 aa).

A signal peptide spans 1 to 30 (MKSPAPSRPQKMALIPACIFLYFAALSVQA). Substrate is bound by residues Arg-152, 159-160 (WD), Asn-196, 205-207 (RSQ), 277-279 (RPE), and Gly-310. Active-site proton donor/acceptor residues include Asp-312 and Glu-496. Residue Glu-511 coordinates substrate. The segment at 540 to 565 (DNVPATHPTVKSATTQPSTKEAQPTP) is disordered. Residues 548-565 (TVKSATTQPSTKEAQPTP) show a composition bias toward polar residues.

Belongs to the glycosyl hydrolase 37 family. Monomer.

The protein resides in the periplasm. It carries out the reaction alpha,alpha-trehalose + H2O = alpha-D-glucose + beta-D-glucose. Functionally, provides the cells with the ability to utilize trehalose at high osmolarity by splitting it into glucose molecules that can subsequently be taken up by the phosphotransferase-mediated uptake system. The polypeptide is Periplasmic trehalase (Shigella flexneri serotype 5b (strain 8401)).